A 318-amino-acid chain; its full sequence is Retinol dehydrogenase 11 (318 aa).

Residues M1–A21 traverse the membrane as a helical; Signal-anchor for type II membrane protein segment. At P22–D318 the chain is on the cytoplasmic side. G48–G54 contributes to the NADP(+) binding site. Residue K112 is modified to N6-acetyllysine. S177 contacts substrate. Y202 acts as the Proton acceptor in catalysis.

Belongs to the short-chain dehydrogenases/reductases (SDR) family. As to quaternary structure, interacts with SELENOF. In terms of processing, not glycosylated. In terms of tissue distribution, predominantly expressed in the epithelial cells of prostate, in both basal and luminal secretory cell populations. Expressed at low levels in spleen, thymus, testis, ovary, small intestine, colon, peripherical blood leukocytes, kidney, adrenal gland and fetal liver. Not detected in prostatic fibromuscular stromal cells, endothelial cells, or infiltrating lymphocytes.

The protein localises to the endoplasmic reticulum membrane. It catalyses the reaction all-trans-retinol + NADP(+) = all-trans-retinal + NADPH + H(+). It carries out the reaction 11-cis-retinol + NADP(+) = 11-cis-retinal + NADPH + H(+). The catalysed reaction is 9-cis-retinol + NADP(+) = 9-cis-retinal + NADPH + H(+). The enzyme catalyses 13-cis-retinol + NADP(+) = 13-cis-retinal + NADPH + H(+). Its pathway is cofactor metabolism; retinol metabolism. Its activity is regulated as follows. SELENOF decreases the retinol dehydrogenase activity. Functionally, retinol dehydrogenase with a clear preference for NADP. Displays high activity towards 9-cis, 11-cis and all-trans-retinol, and to a lesser extent on 13-cis-retinol. Exhibits a low reductive activity towards unsaturated medium-chain aldehydes such as cis -6-nonenal and no activity toward nonanal or 4-hydroxy-nonenal. Has no dehydrogenase activity towards steroid. This Homo sapiens (Human) protein is Retinol dehydrogenase 11 (RDH11).